Consider the following 573-residue polypeptide: DNA polymerase lambda (573 aa).

In terms of domain architecture, BRCT spans 35–131; sequence EARGWLSSLR…RLTDTEGFSL (97 aa). Disordered regions lie at residues 126–204 and 214–233; these read TEGF…GPQV and TGHYPTPPEEDGGPDPAPEA. A DNA-binding region spans residues 263–277; that stretch reads KAYSVQGDKWRALGY. Residue Lys-310 is the Schiff-base intermediate with DNA of the active site. The segment at 343 to 346 is DNA-binding; it reads GTKT. Residues Arg-384, 415-418, and 424-427 contribute to the dCTP site; these read SYRR and GDVD. Residues 418–427 form an involved in primer binding region; it reads RGKMTCGDVD. Positions 425, 427, and 488 each coordinate Mn(2+). The segment at 464–503 is DNA-binding; sequence ENGQQQKYLGVCRLPGPGKRHRRLDIIVVPYCEFACALLY. Asn-511 lines the dCTP pocket.

The protein belongs to the DNA polymerase type-X family. Interacts with PCNA. Interacts with PAXX; promoting POLL recruitment to double-strand breaks (DSBs) and stimulation of the end-filling activity of POLL. Interacts with XRCC4; promoting POLL recruitment to double-strand breaks (DSBs) and stimulation of the end-filling activity of POLL. Interacts with NHEJ1/XLF; promoting POLL recruitment to double-strand breaks (DSBs) and stimulation of the end-filling activity of POLL. Requires Mn(2+) as cofactor.

It is found in the nucleus. It catalyses the reaction DNA(n) + a 2'-deoxyribonucleoside 5'-triphosphate = DNA(n+1) + diphosphate. DNA polymerase that functions in several pathways of DNA repair. Involved in base excision repair (BER) responsible for repair of lesions that give rise to abasic (AP) sites in DNA. Also contributes to DNA double-strand break repair by non-homologous end joining and homologous recombination. Has both template-dependent and template-independent (terminal transferase) DNA polymerase activities. Also has a 5'-deoxyribose-5-phosphate lyase (dRP lyase) activity. This Mus musculus (Mouse) protein is DNA polymerase lambda.